Consider the following 302-residue polypeptide: RNA polymerase II holoenzyme cyclin-like subunit (302 aa).

The region spanning 53-142 (QQLIKLGKRM…LGECEFSLIS (90 aa)) is the Cyclin N-terminal domain.

It belongs to the cyclin family. Cyclin C subfamily. Component of the srb8-11 complex, a regulatory module of the Mediator complex.

Its subcellular location is the nucleus. Its function is as follows. Component of the srb8-11 complex. The srb8-11 complex is a regulatory module of the Mediator complex which is itself involved in regulation of basal and activated RNA polymerase II-dependent transcription. The srb8-11 complex may be involved in the transcriptional repression of a subset of genes regulated by Mediator. It may inhibit the association of the Mediator complex with RNA polymerase II to form the holoenzyme complex. The srb8-11 complex phosphorylates the C-terminal domain (CTD) of the largest subunit of RNA polymerase II. This is RNA polymerase II holoenzyme cyclin-like subunit (ssn8) from Aspergillus fumigatus (strain ATCC MYA-4609 / CBS 101355 / FGSC A1100 / Af293) (Neosartorya fumigata).